Reading from the N-terminus, the 696-residue chain is Golgi integral membrane protein 4 (696 aa).

Glycine 2 carries the N-myristoyl glycine lipid modification. The Cytoplasmic portion of the chain corresponds to 2–12 (GNGMCSRKQKR). The chain crosses the membrane as a helical; Signal-anchor for type II membrane protein span at residues 13 to 33 (IFQTLLLLTVVFGFLYGAMLY). Residues 34 to 696 (YELQTQLRKA…AEKSHRRAEM (663 aa)) lie on the Lumenal side of the membrane. A coiled-coil region spans residues 35-244 (ELQTQLRKAE…KQLKDTLNRI (210 aa)). The segment at 38 to 107 (TQLRKAEAVA…ETLNKGRQDS (70 aa)) is golgi targeting. The segment at 80–175 (LEHKKAKEDF…QELSKLKETV (96 aa)) is endosome targeting. Disordered stretches follow at residues 122–145 (KSQH…QGED), 244–391 (IPSL…HARA), and 427–696 (LREH…RAEM). The segment covering 123–145 (SQHEELKKQHSDLEEEHRKQGED) has biased composition (basic and acidic residues). The golgi targeting stretch occupies residues 176–248 (YNLREENRQL…DTLNRIPSLR (73 aa)). Positions 254–269 (EQQNVTQVAHSPQGYN) are enriched in polar residues. N-linked (GlcNAc...) asparagine glycosylation occurs at asparagine 257. Basic and acidic residues-rich tracts occupy residues 271-281 (AREKPTREVQE), 298-313 (RAED…KEAE), 324-343 (EVER…RKAL), 355-364 (EHLEEEHDPS), and 370-380 (REWKEQHEQRE). At serine 364 the chain carries Phosphoserine. The segment covering 436-453 (QQRLQGHLLRQQEQQQQQ) has biased composition (low complexity). 2 stretches are compositionally biased toward basic and acidic residues: residues 464–476 (AELE…HQEQ) and 505–545 (AYER…RAAV). Phosphoserine is present on serine 538. Residues 604–626 (QQEDNVDEQYQEEAEEEVQEDLT) are compositionally biased toward acidic residues. Tyrosine 613 carries the post-translational modification Phosphotyrosine. At threonine 626 the chain carries Phosphothreonine. Basic and acidic residues-rich tracts occupy residues 627–638 (EEKKRELEHNAE) and 661–672 (RDDNRPKGREEH). The residue at position 673 (tyrosine 673) is a Phosphotyrosine. Positions 673 to 683 (YEEEEEEEEDG) are enriched in acidic residues.

Belongs to the GOLIM4 family. Phosphorylated probably by c-AMP-dependent kinases in its lumenal part. Post-translationally, O-glycosylated; modified by sialic acid residues. In terms of processing, N-glycosylated; N-glycans are probably of the complex type and modified by sialic acid residues.

It is found in the golgi apparatus. The protein resides in the golgi stack membrane. Its subcellular location is the endosome membrane. It localises to the membrane. In terms of biological role, plays a role in endosome to Golgi protein trafficking; mediates protein transport along the late endosome-bypass pathway from the early endosome to the Golgi. In Homo sapiens (Human), this protein is Golgi integral membrane protein 4 (GOLIM4).